Reading from the N-terminus, the 380-residue chain is Cytochrome b (380 aa).

Transmembrane regions (helical) follow at residues 33–53 (FGSL…FLAM), 77–98 (WLIR…FIHV), 113–133 (WNIG…GYVL), and 178–198 (FFAF…VHLL). Residues His83 and His97 each contribute to the heme b site. 2 residues coordinate heme b: His182 and His196. An a ubiquinone-binding site is contributed by His201. Helical transmembrane passes span 226 to 246 (IKDL…VLFF), 288 to 308 (LGGV…PLLN), 320 to 340 (LTQF…WIGG), and 347 to 367 (FTTI…VLMP).

The protein belongs to the cytochrome b family. The cytochrome bc1 complex contains 11 subunits: 3 respiratory subunits (MT-CYB, CYC1 and UQCRFS1), 2 core proteins (UQCRC1 and UQCRC2) and 6 low-molecular weight proteins (UQCRH/QCR6, UQCRB/QCR7, UQCRQ/QCR8, UQCR10/QCR9, UQCR11/QCR10 and a cleavage product of UQCRFS1). This cytochrome bc1 complex then forms a dimer. The cofactor is heme b.

Its subcellular location is the mitochondrion inner membrane. Its function is as follows. Component of the ubiquinol-cytochrome c reductase complex (complex III or cytochrome b-c1 complex) that is part of the mitochondrial respiratory chain. The b-c1 complex mediates electron transfer from ubiquinol to cytochrome c. Contributes to the generation of a proton gradient across the mitochondrial membrane that is then used for ATP synthesis. The protein is Cytochrome b (MT-CYB) of Thomasomys notatus (Distinguished oldfield mouse).